The following is a 464-amino-acid chain: Rab GDP-dissociation inhibitor (464 aa).

This sequence belongs to the Rab GDI family. In terms of assembly, interacts with the GDP-bound form of Rab GTPase YPT7.

In terms of biological role, regulates the GDP/GTP exchange reaction of YPT7 by inhibiting the dissociation of GDP from it, and the subsequent binding of GTP to YTP7. This Pyricularia oryzae (strain 70-15 / ATCC MYA-4617 / FGSC 8958) (Rice blast fungus) protein is Rab GDP-dissociation inhibitor (GDI1).